A 356-amino-acid chain; its full sequence is UDP-N-acetylglucosamine--N-acetylmuramyl-(pentapeptide) pyrophosphoryl-undecaprenol N-acetylglucosamine transferase (356 aa).

Residues Thr-14–Gly-16, Asn-126, Arg-162, Ser-190, Ile-244, and Gln-289 contribute to the UDP-N-acetyl-alpha-D-glucosamine site.

It belongs to the glycosyltransferase 28 family. MurG subfamily.

It localises to the cell inner membrane. It carries out the reaction di-trans,octa-cis-undecaprenyl diphospho-N-acetyl-alpha-D-muramoyl-L-alanyl-D-glutamyl-meso-2,6-diaminopimeloyl-D-alanyl-D-alanine + UDP-N-acetyl-alpha-D-glucosamine = di-trans,octa-cis-undecaprenyl diphospho-[N-acetyl-alpha-D-glucosaminyl-(1-&gt;4)]-N-acetyl-alpha-D-muramoyl-L-alanyl-D-glutamyl-meso-2,6-diaminopimeloyl-D-alanyl-D-alanine + UDP + H(+). The protein operates within cell wall biogenesis; peptidoglycan biosynthesis. Functionally, cell wall formation. Catalyzes the transfer of a GlcNAc subunit on undecaprenyl-pyrophosphoryl-MurNAc-pentapeptide (lipid intermediate I) to form undecaprenyl-pyrophosphoryl-MurNAc-(pentapeptide)GlcNAc (lipid intermediate II). The sequence is that of UDP-N-acetylglucosamine--N-acetylmuramyl-(pentapeptide) pyrophosphoryl-undecaprenol N-acetylglucosamine transferase from Cupriavidus pinatubonensis (strain JMP 134 / LMG 1197) (Cupriavidus necator (strain JMP 134)).